Here is a 387-residue protein sequence, read N- to C-terminus: Galactokinase (387 aa).

Residue 33–36 (EHID) participates in substrate binding. ATP is bound by residues Ser-67 and 124-130 (GAGLSSS). Positions 130 and 162 each coordinate Mg(2+). Asp-174 serves as the catalytic Proton acceptor. Position 224 (Tyr-224) interacts with substrate.

It belongs to the GHMP kinase family. GalK subfamily.

Its subcellular location is the cytoplasm. The enzyme catalyses alpha-D-galactose + ATP = alpha-D-galactose 1-phosphate + ADP + H(+). It participates in carbohydrate metabolism; galactose metabolism. Catalyzes the transfer of the gamma-phosphate of ATP to D-galactose to form alpha-D-galactose-1-phosphate (Gal-1-P). This is Galactokinase from Clostridium perfringens (strain SM101 / Type A).